We begin with the raw amino-acid sequence, 447 residues long: MVGMMRKTKILVTLGPSLENKLDKAINLIDGVRFNMSHATTDYCEKFLNILEKNNIAKVMDLKGIKIRIKEVKLKNKILKMGEKVVIGEDIKLNYNIDTIEEGHFILINDGKIKLRVVEKTDKIIAVVEVGGEIKEGMGVNLPDTRIELPIIDETDLKNIKFAVEKDFEYIALSFVRNKEDVKELKDIISEYKGDCEVISKIETKEGLKNIKEIARESDGVMVARGDLGVEVPIENIPIEQKNILRIANRYGILSITATQILDSMINNPFPTRAEVTDIANAIYDGTDCLMLSNETTIGKYPIEAIKVLNKVAKVADEHYEEFGDRVCLEVESIDEGLVYAVYELYKKLNTKLVITPTYSGRTAKLISKLRINSKIIAPTPNIRTLKRLRLVWGVESCLMEEFDDMEKIINTCREMAKKEIGKGIYLITLGHPIGQKKTNTIKVESI.

Position 33 (arginine 33) interacts with substrate. 3 residues coordinate K(+): asparagine 35, serine 37, and aspartate 61. 35–38 provides a ligand contact to ATP; sequence NMSH. Position 68 (arginine 68) interacts with ATP. Glutamate 203 is a binding site for Mg(2+). Substrate contacts are provided by glycine 226, aspartate 227, and threonine 259. Aspartate 227 is a binding site for Mg(2+).

The protein belongs to the pyruvate kinase family. As to quaternary structure, homotetramer. Mg(2+) is required as a cofactor. Requires K(+) as cofactor.

The enzyme catalyses pyruvate + ATP = phosphoenolpyruvate + ADP + H(+). The protein operates within carbohydrate degradation; glycolysis; pyruvate from D-glyceraldehyde 3-phosphate: step 5/5. The polypeptide is Pyruvate kinase (Methanocaldococcus jannaschii (strain ATCC 43067 / DSM 2661 / JAL-1 / JCM 10045 / NBRC 100440) (Methanococcus jannaschii)).